We begin with the raw amino-acid sequence, 309 residues long: D-alanine--D-alanine ligase (309 aa).

Positions 110 to 305 (KLCWTGAGLP…FQELVWHILE (196 aa)) constitute an ATP-grasp domain. 136 to 191 (RQALGFPVIVKPAEEGSSIGMSRAATAEELAQAWERASGYGCAVFAERWIDGVEYT) serves as a coordination point for ATP. Residues Asp259, Glu272, and Asn274 each coordinate Mg(2+).

The protein belongs to the D-alanine--D-alanine ligase family. It depends on Mg(2+) as a cofactor. The cofactor is Mn(2+).

It localises to the cytoplasm. It carries out the reaction 2 D-alanine + ATP = D-alanyl-D-alanine + ADP + phosphate + H(+). It participates in cell wall biogenesis; peptidoglycan biosynthesis. Its function is as follows. Cell wall formation. The polypeptide is D-alanine--D-alanine ligase (Methylococcus capsulatus (strain ATCC 33009 / NCIMB 11132 / Bath)).